Here is a 145-residue protein sequence, read N- to C-terminus: Basic phospholipase A2 cPm08 (145 aa).

A signal peptide spans 1–21; sequence MYPAHLLVLLAVCVSLLGASA. The propeptide occupies 22 to 27; sequence IPPLPL. 7 cysteine pairs are disulfide-bonded: cysteine 38–cysteine 98, cysteine 54–cysteine 144, cysteine 56–cysteine 72, cysteine 71–cysteine 125, cysteine 78–cysteine 118, cysteine 87–cysteine 111, and cysteine 105–cysteine 116. Ca(2+) is bound by residues tyrosine 55, glycine 57, and glycine 59. The active site involves histidine 75. Aspartate 76 is a Ca(2+) binding site. The active site involves aspartate 119.

It belongs to the phospholipase A2 family. Group I subfamily. D49 sub-subfamily. It depends on Ca(2+) as a cofactor. Expressed by the venom gland.

It is found in the secreted. The catalysed reaction is a 1,2-diacyl-sn-glycero-3-phosphocholine + H2O = a 1-acyl-sn-glycero-3-phosphocholine + a fatty acid + H(+). Its function is as follows. PLA2 catalyzes the calcium-dependent hydrolysis of the 2-acyl groups in 3-sn-phosphoglycerides. This Laticauda semifasciata (Black-banded sea krait) protein is Basic phospholipase A2 cPm08.